Reading from the N-terminus, the 421-residue chain is Serine--tRNA ligase (421 aa).

An L-serine-binding site is contributed by 229–231 (TAE). 260–262 (RSE) lines the ATP pocket. Glu-283 contacts L-serine. An ATP-binding site is contributed by 347-350 (EISS). An L-serine-binding site is contributed by Ser-382.

This sequence belongs to the class-II aminoacyl-tRNA synthetase family. Type-1 seryl-tRNA synthetase subfamily. As to quaternary structure, homodimer. The tRNA molecule binds across the dimer.

It is found in the cytoplasm. It catalyses the reaction tRNA(Ser) + L-serine + ATP = L-seryl-tRNA(Ser) + AMP + diphosphate + H(+). The catalysed reaction is tRNA(Sec) + L-serine + ATP = L-seryl-tRNA(Sec) + AMP + diphosphate + H(+). The protein operates within aminoacyl-tRNA biosynthesis; selenocysteinyl-tRNA(Sec) biosynthesis; L-seryl-tRNA(Sec) from L-serine and tRNA(Sec): step 1/1. Catalyzes the attachment of serine to tRNA(Ser). Is also able to aminoacylate tRNA(Sec) with serine, to form the misacylated tRNA L-seryl-tRNA(Sec), which will be further converted into selenocysteinyl-tRNA(Sec). The polypeptide is Serine--tRNA ligase (Symbiobacterium thermophilum (strain DSM 24528 / JCM 14929 / IAM 14863 / T)).